We begin with the raw amino-acid sequence, 319 residues long: Ribosomal RNA small subunit methyltransferase H (319 aa).

S-adenosyl-L-methionine-binding positions include 39–41, Asp-59, Phe-83, Asp-104, and Gln-111; that span reads GGH.

This sequence belongs to the methyltransferase superfamily. RsmH family.

It localises to the cytoplasm. The catalysed reaction is cytidine(1402) in 16S rRNA + S-adenosyl-L-methionine = N(4)-methylcytidine(1402) in 16S rRNA + S-adenosyl-L-homocysteine + H(+). Functionally, specifically methylates the N4 position of cytidine in position 1402 (C1402) of 16S rRNA. The chain is Ribosomal RNA small subunit methyltransferase H from Ralstonia pickettii (strain 12J).